The following is a 306-amino-acid chain: Ribosomal protein L11 methyltransferase (306 aa).

S-adenosyl-L-methionine contacts are provided by Thr154, Gly179, Asp201, and Asn242.

It belongs to the methyltransferase superfamily. PrmA family.

It localises to the cytoplasm. It carries out the reaction L-lysyl-[protein] + 3 S-adenosyl-L-methionine = N(6),N(6),N(6)-trimethyl-L-lysyl-[protein] + 3 S-adenosyl-L-homocysteine + 3 H(+). Its function is as follows. Methylates ribosomal protein L11. In Xanthomonas campestris pv. campestris (strain 8004), this protein is Ribosomal protein L11 methyltransferase.